A 264-amino-acid polypeptide reads, in one-letter code: MPFTFKLFHVDDSRCGMPVSTDGVLLGAWAPLVQAKTILDIGAGSGLLSLMAAQRSLAKITAIEVDTDAALDCQQNFNASPWFDRLEVICCDIQAYAQAHTQVHSQAHNHAEQSKQFEHIICNPPYFANGPQSSNVSRATARHTDSLSFDSLLAAIKQLLSPEGCASLILPTESVSLFETKLSTYQLELSQKLLAASVEGKEANRQILVLRHTSALAHDPKTETEPAVVAKLEDAAQQQLYIREKNGQYSQAFSLLSRDFYLKL.

It belongs to the methyltransferase superfamily. tRNA (adenine-N(6)-)-methyltransferase family.

The protein resides in the cytoplasm. The enzyme catalyses adenosine(37) in tRNA1(Val) + S-adenosyl-L-methionine = N(6)-methyladenosine(37) in tRNA1(Val) + S-adenosyl-L-homocysteine + H(+). Its function is as follows. Specifically methylates the adenine in position 37 of tRNA(1)(Val) (anticodon cmo5UAC). The sequence is that of tRNA1(Val) (adenine(37)-N6)-methyltransferase from Shewanella pealeana (strain ATCC 700345 / ANG-SQ1).